A 107-amino-acid chain; its full sequence is U1-lycotoxin-Ls1n (107 aa).

A signal peptide spans 1–20 (MMKVLVVVALLVTLISYSSS). A propeptide spanning residues 21–41 (EGIDDLEADELLSLMANEQTR) is cleaved from the precursor. 4 cysteine pairs are disulfide-bonded: Cys44/Cys59, Cys51/Cys68, Cys58/Cys86, and Cys70/Cys84.

It belongs to the neurotoxin 19 (CSTX) family. 04 (U1-Lctx) subfamily. Expressed by the venom gland.

The protein resides in the secreted. The polypeptide is U1-lycotoxin-Ls1n (Lycosa singoriensis (Wolf spider)).